The chain runs to 325 residues: Tetraacyldisaccharide 4'-kinase (325 aa).

An ATP-binding site is contributed by 55–62; the sequence is TAGGNGKT.

Belongs to the LpxK family.

The enzyme catalyses a lipid A disaccharide + ATP = a lipid IVA + ADP + H(+). It participates in glycolipid biosynthesis; lipid IV(A) biosynthesis; lipid IV(A) from (3R)-3-hydroxytetradecanoyl-[acyl-carrier-protein] and UDP-N-acetyl-alpha-D-glucosamine: step 6/6. Its function is as follows. Transfers the gamma-phosphate of ATP to the 4'-position of a tetraacyldisaccharide 1-phosphate intermediate (termed DS-1-P) to form tetraacyldisaccharide 1,4'-bis-phosphate (lipid IVA). In Salmonella paratyphi B (strain ATCC BAA-1250 / SPB7), this protein is Tetraacyldisaccharide 4'-kinase.